Reading from the N-terminus, the 224-residue chain is RNA-binding protein 24-B (224 aa).

The region spanning 11–88 (TKIFVGGLPY…RKANVNLAYL (78 aa)) is the RRM domain.

It is found in the nucleus. Its subcellular location is the cytoplasm. Multifunctional RNA-binding protein involved in the regulation of pre-mRNA splicing, mRNA stability and mRNA translation important for cell fate decision and differentiation. Plays a major role in pre-mRNA alternative splicing regulation. Mediates preferentially muscle-specific exon inclusion in numerous mRNAs important for striated cardiac and skeletal muscle cell differentiation. Binds to intronic splicing enhancer (ISE) composed of stretches of GU-rich motifs localized in flanking intron of exon that will be included by alternative splicing. Involved in embryonic stem cell (ESC) transition to cardiac cell differentiation by promoting pre-mRNA alternative splicing events of several pluripotency and/or differentiation genes. Plays a role in the regulation of mRNA stability and mRNA translation to which it is bound. Involved in myogenic differentiation by regulating myog levels. Binds to a huge amount of mRNAs. Required for embryonic heart development, sarcomer and M-band formation in striated muscles. The sequence is that of RNA-binding protein 24-B (rbm24-b) from Xenopus laevis (African clawed frog).